Reading from the N-terminus, the 457-residue chain is MHILKVGFNYKTTPVDIREKFTFSEDSLQDAMVELKNQKSILEDVIISTCNRTEIYAVVDQLHTGRYYIKQFLSNWFGIEKEEFSTYLRITEDDGAMEHLFRVSTGLDSMVLGETQILGQVKQAFLNSQQVNTTGTIFNELFKQAITFGKRAHKETAIGEHAVSISYAAVELAKKIFGDLQEKHVAILGAGKMGELAAKNIQGSGATKITVVNRTLENANEMAEKFNADVESIDQLPVILQQADILISSTGADSIVVTKEMMEKVQKQRKGRALFLVDIAVPRDMDPAISELENVFLYDIDNLQHIVDDNLESRKQAAEKIELLIEEEIVTFKEWLKTLGVIPVISALRQKALTIQAETMQSIERKIPNLTDRERKVLNKHTKSIINQLLKEPVTQAKEFAGKDNAEDSLQLFINIFGIEEEVKEELVKHAKKNETLMKIAKEEPSSFPIIEKITTA.

Substrate is bound by residues 49 to 52 (TCNR), S109, 114 to 116 (ETQ), and Q120. The active-site Nucleophile is the C50. 189 to 194 (GAGKMG) is an NADP(+) binding site.

The protein belongs to the glutamyl-tRNA reductase family. Homodimer.

The catalysed reaction is (S)-4-amino-5-oxopentanoate + tRNA(Glu) + NADP(+) = L-glutamyl-tRNA(Glu) + NADPH + H(+). Its pathway is porphyrin-containing compound metabolism; protoporphyrin-IX biosynthesis; 5-aminolevulinate from L-glutamyl-tRNA(Glu): step 1/2. In terms of biological role, catalyzes the NADPH-dependent reduction of glutamyl-tRNA(Glu) to glutamate 1-semialdehyde (GSA). The protein is Glutamyl-tRNA reductase of Oceanobacillus iheyensis (strain DSM 14371 / CIP 107618 / JCM 11309 / KCTC 3954 / HTE831).